The sequence spans 269 residues: F-box protein At5g52880 (269 aa).

An F-box domain is found at D109–Q155.

The chain is F-box protein At5g52880 from Arabidopsis thaliana (Mouse-ear cress).